A 350-amino-acid polypeptide reads, in one-letter code: Anthranilate phosphoribosyltransferase (350 aa).

5-phospho-alpha-D-ribose 1-diphosphate contacts are provided by residues Gly94, 97-98, Thr102, 104-107, 122-130, and Ser134; these read GD, NVST, and KHGNRSVSS. Residue Gly94 participates in anthranilate binding. Ser106 serves as a coordination point for Mg(2+). Position 125 (Asn125) interacts with anthranilate. Arg180 provides a ligand contact to anthranilate. Positions 239 and 240 each coordinate Mg(2+).

This sequence belongs to the anthranilate phosphoribosyltransferase family. In terms of assembly, homodimer. Requires Mg(2+) as cofactor.

The enzyme catalyses N-(5-phospho-beta-D-ribosyl)anthranilate + diphosphate = 5-phospho-alpha-D-ribose 1-diphosphate + anthranilate. It participates in amino-acid biosynthesis; L-tryptophan biosynthesis; L-tryptophan from chorismate: step 2/5. Catalyzes the transfer of the phosphoribosyl group of 5-phosphorylribose-1-pyrophosphate (PRPP) to anthranilate to yield N-(5'-phosphoribosyl)-anthranilate (PRA). The chain is Anthranilate phosphoribosyltransferase from Pelobacter propionicus (strain DSM 2379 / NBRC 103807 / OttBd1).